We begin with the raw amino-acid sequence, 82 residues long: ATP synthase subunit c, chloroplastic (82 aa).

Transmembrane regions (helical) follow at residues 4–24 (IISAASVIAAGLAIGLAAIGP) and 57–77 (LAFMEALTIYGLVVALALLFA).

It belongs to the ATPase C chain family. As to quaternary structure, F-type ATPases have 2 components, F(1) - the catalytic core - and F(0) - the membrane proton channel. F(1) has five subunits: alpha(3), beta(3), gamma(1), delta(1), epsilon(1). F(0) has four main subunits: a(1), b(1), b'(1) and c(10-14). The alpha and beta chains form an alternating ring which encloses part of the gamma chain. F(1) is attached to F(0) by a central stalk formed by the gamma and epsilon chains, while a peripheral stalk is formed by the delta, b and b' chains.

Its subcellular location is the plastid. The protein localises to the chloroplast thylakoid membrane. F(1)F(0) ATP synthase produces ATP from ADP in the presence of a proton or sodium gradient. F-type ATPases consist of two structural domains, F(1) containing the extramembraneous catalytic core and F(0) containing the membrane proton channel, linked together by a central stalk and a peripheral stalk. During catalysis, ATP synthesis in the catalytic domain of F(1) is coupled via a rotary mechanism of the central stalk subunits to proton translocation. Its function is as follows. Key component of the F(0) channel; it plays a direct role in translocation across the membrane. A homomeric c-ring of between 10-14 subunits forms the central stalk rotor element with the F(1) delta and epsilon subunits. The protein is ATP synthase subunit c, chloroplastic of Thalassiosira pseudonana (Marine diatom).